The chain runs to 366 residues: Chorismate synthase (366 aa).

Residues Arg-48 and Arg-54 each contribute to the NADP(+) site. Residues Arg-131–Ser-133, Asn-243–Ala-244, Gly-288, Lys-303–Ser-307, and Arg-329 contribute to the FMN site.

The protein belongs to the chorismate synthase family. In terms of assembly, homotetramer. Requires FMNH2 as cofactor.

It carries out the reaction 5-O-(1-carboxyvinyl)-3-phosphoshikimate = chorismate + phosphate. It functions in the pathway metabolic intermediate biosynthesis; chorismate biosynthesis; chorismate from D-erythrose 4-phosphate and phosphoenolpyruvate: step 7/7. Catalyzes the anti-1,4-elimination of the C-3 phosphate and the C-6 proR hydrogen from 5-enolpyruvylshikimate-3-phosphate (EPSP) to yield chorismate, which is the branch point compound that serves as the starting substrate for the three terminal pathways of aromatic amino acid biosynthesis. This reaction introduces a second double bond into the aromatic ring system. This chain is Chorismate synthase, found in Bartonella quintana (strain Toulouse) (Rochalimaea quintana).